The primary structure comprises 85 residues: Turmerin (85 aa).

In terms of processing, the N-terminus is blocked.

Its function is as follows. Inhibition of trypsin. Has anticarcinogenic activity, prevents transformation of DMBA-treated JB6 cells. Has antipromoter activity, prevents promotion by tetradecanoyl phorbal acetate (TPA) in JB6 cells. Prevents tertiary butyl hydroperoxide-induced mutagenesis. Protects AT base pairs and shows antimutagenesis activity in TA102 and TA104 S.typhimurium mutagenesis tests. Inhibits paw edema formation induced by phospholipase A2 in Swiss Wistar mice. Prevents the release of arachidonate, the parent compound for the synthesis of prostaglandins and prostacyclins. Has antimalarial activity, kills P.falciparum. Has antivenom activity, nullifies the lethal effects of N.naja venom and inhibits phospholipase A2 present in N.naja venom. Has antifungal activity, inhibits cilia formation by A.niger. Is not toxic or allergenic. The sequence is that of Turmerin from Curcuma longa (Turmeric).